Here is a 240-residue protein sequence, read N- to C-terminus: Ribosomal RNA small subunit methyltransferase J (240 aa).

S-adenosyl-L-methionine contacts are provided by residues 93–94 and D162; that span reads RD.

It belongs to the methyltransferase superfamily. RsmJ family.

It localises to the cytoplasm. It carries out the reaction guanosine(1516) in 16S rRNA + S-adenosyl-L-methionine = N(2)-methylguanosine(1516) in 16S rRNA + S-adenosyl-L-homocysteine + H(+). Its function is as follows. Specifically methylates the guanosine in position 1516 of 16S rRNA. The protein is Ribosomal RNA small subunit methyltransferase J of Francisella philomiragia subsp. philomiragia (strain ATCC 25017 / CCUG 19701 / FSC 153 / O#319-036).